The following is a 257-amino-acid chain: Putative phosphatase YkrA (257 aa).

The active-site Nucleophile is Asp-9. Asp-9 is a binding site for Mg(2+). Ile-10 is a binding site for phosphate. Asp-11 contacts Mg(2+). Residues 43-44 and Lys-183 contribute to the phosphate site; that span reads SG. A Mg(2+)-binding site is contributed by Asp-206. Asn-209 serves as a coordination point for phosphate.

Belongs to the HAD-like hydrolase superfamily. Cof family. Mg(2+) serves as cofactor.

In Bacillus subtilis (strain 168), this protein is Putative phosphatase YkrA (ykrA).